The sequence spans 138 residues: Thyrotropin subunit beta (138 aa).

Positions 1 to 20 (MSAAVLLSVLFALACGQAAS) are cleaved as a signal peptide. Cystine bridges form between C22–C72, C36–C87, C39–C125, C47–C103, C51–C105, and C108–C115. N43 carries N-linked (GlcNAc...) asparagine glycosylation. A propeptide spanning residues 133–138 (LGGFSV) is cleaved from the precursor.

Belongs to the glycoprotein hormones subunit beta family. As to quaternary structure, heterodimer of a common alpha chain and a unique beta chain which confers biological specificity to thyrotropin, lutropin, follitropin and gonadotropin.

The protein localises to the secreted. Indispensable for the control of thyroid structure and metabolism. The sequence is that of Thyrotropin subunit beta (Tshb) from Mus musculus (Mouse).